A 305-amino-acid chain; its full sequence is Ribosomal RNA small subunit methyltransferase H (305 aa).

S-adenosyl-L-methionine contacts are provided by residues 46–48 (GGH), Asp-65, Phe-92, Asp-108, and His-115.

The protein belongs to the methyltransferase superfamily. RsmH family.

The protein resides in the cytoplasm. The catalysed reaction is cytidine(1402) in 16S rRNA + S-adenosyl-L-methionine = N(4)-methylcytidine(1402) in 16S rRNA + S-adenosyl-L-homocysteine + H(+). Specifically methylates the N4 position of cytidine in position 1402 (C1402) of 16S rRNA. The protein is Ribosomal RNA small subunit methyltransferase H of Trichormus variabilis (strain ATCC 29413 / PCC 7937) (Anabaena variabilis).